The primary structure comprises 154 residues: Methylglyoxal synthase (154 aa).

The MGS-like domain occupies 6-154 (GALPSRKQIA…AYIAERTKKL (149 aa)). Substrate-binding positions include His-19, Lys-23, 45–48 (TGTT), and 65–66 (SG). Asp-71 serves as the catalytic Proton donor/acceptor. His-98 contacts substrate.

The protein belongs to the methylglyoxal synthase family.

The catalysed reaction is dihydroxyacetone phosphate = methylglyoxal + phosphate. Functionally, catalyzes the formation of methylglyoxal from dihydroxyacetone phosphate. The chain is Methylglyoxal synthase from Saccharophagus degradans (strain 2-40 / ATCC 43961 / DSM 17024).